The chain runs to 292 residues: MNFQELILTLDNFWARQNCIIQQPYDVEKGAGTMNPATFLRALGPEPWRVAYVEPSRRPTDGRYGENPNRLQHYYQYQVILKPSPDDVLEVYLDSLKAIGIDPDEHDIRFVEDNWESPTLGAWGLGWEVWLDGMEVTQFTYFQQCGGIDCRPVSAEITYGLERLAMFIQGVDNVFDITWVDGITYGDVHHRGEVEHSHYNFELADTEMLFKLFDMYEREALRVVEKGFVLPAYDYVLKCSHTFNLLDARGAISVTERTGFIGRVRNLARTCAQAYIEQRQAMGYPLLKRKED.

It belongs to the class-II aminoacyl-tRNA synthetase family. Tetramer of two alpha and two beta subunits.

It is found in the cytoplasm. The enzyme catalyses tRNA(Gly) + glycine + ATP = glycyl-tRNA(Gly) + AMP + diphosphate. This chain is Glycine--tRNA ligase alpha subunit, found in Pelotomaculum thermopropionicum (strain DSM 13744 / JCM 10971 / SI).